The chain runs to 149 residues: UPF0251 protein Moth_1655 (149 aa).

Residues 129–149 are disordered; the sequence is AGRGPGRGRCHRHGRFGEGEH.

It belongs to the UPF0251 family.

The chain is UPF0251 protein Moth_1655 from Moorella thermoacetica (strain ATCC 39073 / JCM 9320).